The sequence spans 382 residues: ATP phosphoribosyltransferase regulatory subunit (382 aa).

This sequence belongs to the class-II aminoacyl-tRNA synthetase family. HisZ subfamily. Heteromultimer composed of HisG and HisZ subunits.

The protein resides in the cytoplasm. It participates in amino-acid biosynthesis; L-histidine biosynthesis; L-histidine from 5-phospho-alpha-D-ribose 1-diphosphate: step 1/9. Its function is as follows. Required for the first step of histidine biosynthesis. May allow the feedback regulation of ATP phosphoribosyltransferase activity by histidine. This Albidiferax ferrireducens (strain ATCC BAA-621 / DSM 15236 / T118) (Rhodoferax ferrireducens) protein is ATP phosphoribosyltransferase regulatory subunit.